The following is a 148-amino-acid chain: Arginine repressor (148 aa).

It belongs to the ArgR family.

Its subcellular location is the cytoplasm. Its pathway is amino-acid biosynthesis; L-arginine biosynthesis [regulation]. In terms of biological role, regulates arginine biosynthesis genes. The polypeptide is Arginine repressor (Prosthecochloris aestuarii (strain DSM 271 / SK 413)).